Reading from the N-terminus, the 239-residue chain is Small ribosomal subunit protein uS3c (239 aa).

Residues 43–139 (IKNYIQKNRK…RLNISIEKVK (97 aa)) form the KH type-2 domain. The interval 50–80 (NRKKGSNRKIESDSSSEVITHNRKTDSGSSS) is disordered.

It belongs to the universal ribosomal protein uS3 family. As to quaternary structure, part of the 30S ribosomal subunit.

It is found in the plastid. It localises to the chloroplast. The polypeptide is Small ribosomal subunit protein uS3c (rps3) (Agrostis stolonifera (Creeping bentgrass)).